The primary structure comprises 219 residues: Alpha N-terminal protein methyltransferase 1 (219 aa).

Residues G64, R69, L111–Q112, and Q127 each bind S-adenosyl-L-methionine.

It belongs to the methyltransferase superfamily. NTM1 family.

The protein localises to the cytoplasm. The enzyme catalyses N-terminal L-alanyl-L-prolyl-L-lysyl-[protein] + 3 S-adenosyl-L-methionine = N-terminal N,N,N-trimethyl-L-alanyl-L-prolyl-L-lysyl-[protein] + 3 S-adenosyl-L-homocysteine + 3 H(+). It catalyses the reaction N-terminal L-seryl-L-prolyl-L-lysyl-[protein] + 3 S-adenosyl-L-methionine = N-terminal N,N,N-trimethyl-L-seryl-L-prolyl-L-lysyl-[protein] + 3 S-adenosyl-L-homocysteine + 3 H(+). The catalysed reaction is N-terminal L-prolyl-L-prolyl-L-lysyl-[protein] + 2 S-adenosyl-L-methionine = N-terminal N,N-dimethyl-L-prolyl-L-prolyl-L-lysyl-[protein] + 2 S-adenosyl-L-homocysteine + 2 H(+). Its function is as follows. Alpha-N-methyltransferase that methylates the N-terminus of target proteins containing the N-terminal motif [Ala/Pro/Ser]-Pro-Lys when the initiator Met is cleaved. Specifically catalyzes mono-, di- or tri-methylation of exposed alpha-amino group of Ala or Ser residue in the [Ala/Ser]-Pro-Lys motif and mono- or di-methylation of Pro in the Pro-Pro-Lys motif. The sequence is that of Alpha N-terminal protein methyltransferase 1 (tae1) from Schizosaccharomyces pombe (strain 972 / ATCC 24843) (Fission yeast).